The primary structure comprises 200 residues: GTP cyclohydrolase-2 (200 aa).

52-56 (RIHSE) lines the GTP pocket. Zn(2+) contacts are provided by cysteine 57, cysteine 68, and cysteine 70. Residues glutamine 73, 94–96 (EGR), and threonine 116 each bind GTP. Aspartate 128 acts as the Proton acceptor in catalysis. Residue arginine 130 is the Nucleophile of the active site. 2 residues coordinate GTP: threonine 151 and lysine 156.

Belongs to the GTP cyclohydrolase II family. The cofactor is Zn(2+).

It catalyses the reaction GTP + 4 H2O = 2,5-diamino-6-hydroxy-4-(5-phosphoribosylamino)-pyrimidine + formate + 2 phosphate + 3 H(+). Its pathway is cofactor biosynthesis; riboflavin biosynthesis; 5-amino-6-(D-ribitylamino)uracil from GTP: step 1/4. In terms of biological role, catalyzes the conversion of GTP to 2,5-diamino-6-ribosylamino-4(3H)-pyrimidinone 5'-phosphate (DARP), formate and pyrophosphate. The protein is GTP cyclohydrolase-2 of Psychromonas ingrahamii (strain DSM 17664 / CCUG 51855 / 37).